Consider the following 31-residue polypeptide: Photosystem I reaction center subunit XII (31 aa).

The helical transmembrane segment at 7-26 (QIFIALLTALIPAFFALKLG) threads the bilayer.

It belongs to the PsaM family.

It localises to the plastid. The protein resides in the chloroplast thylakoid membrane. This Euglena granulata protein is Photosystem I reaction center subunit XII.